A 146-amino-acid polypeptide reads, in one-letter code: Hemoglobin subunit beta (146 aa).

An N-acetylvaline modification is found at valine 1. Positions 2 to 146 (HLTGEEKAAV…VANALAHKYH (145 aa)) constitute a Globin domain. Threonine 12 bears the Phosphothreonine mark. A Phosphoserine modification is found at serine 44. The residue at position 59 (lysine 59) is an N6-acetyllysine. Position 63 (histidine 63) interacts with heme b. At lysine 82 the chain carries N6-acetyllysine. Histidine 92 is a binding site for heme b. Cysteine 93 is modified (S-nitrosocysteine). Lysine 144 carries the post-translational modification N6-acetyllysine.

This sequence belongs to the globin family. As to quaternary structure, heterotetramer of two alpha chains and two beta chains. In terms of tissue distribution, red blood cells.

Functionally, involved in oxygen transport from the lung to the various peripheral tissues. This Ailurus fulgens (Himalayan red panda) protein is Hemoglobin subunit beta (HBB).